The primary structure comprises 440 residues: Chromosome partition protein MukF (440 aa).

A leucine-zipper region spans residues 208–236; the sequence is LSETSGTLRELQDTLEAAGDKLQANLLQI.

This sequence belongs to the MukF family. Interacts, and probably forms a ternary complex, with MukE and MukB via its C-terminal region. The complex formation is stimulated by calcium or magnesium. It is required for an interaction between MukE and MukB.

It localises to the cytoplasm. Its subcellular location is the nucleoid. In terms of biological role, involved in chromosome condensation, segregation and cell cycle progression. May participate in facilitating chromosome segregation by condensation DNA from both sides of a centrally located replisome during cell division. Not required for mini-F plasmid partitioning. Probably acts via its interaction with MukB and MukE. Overexpression results in anucleate cells. It has a calcium binding activity. The protein is Chromosome partition protein MukF of Cronobacter sakazakii (strain ATCC BAA-894) (Enterobacter sakazakii).